The sequence spans 473 residues: Biotin-dependent acetyl-/propionyl-coenzyme A carboxylase beta6 subunit (473 aa).

Residues 1-224 form the CoA carboxyltransferase N-terminal domain; it reads MTIMAPEAVG…QGHFDRSKAE (224 aa). A CoA carboxyltransferase C-terminal domain is found at 225–473; the sequence is AGDTDIHALL…RRGRHKNIPL (249 aa).

It belongs to the AccD/PCCB family. The biotin-dependent acyl-CoA carboxylase complex is composed of AccA3, which contains the biotin carboxylase (BC) and biotin carboxyl carrier protein (BCCP) domains, and AccD6, which contains the carboxyl transferase (CT) domain.

It catalyses the reaction N(6)-carboxybiotinyl-L-lysyl-[protein] + acetyl-CoA = N(6)-biotinyl-L-lysyl-[protein] + malonyl-CoA. It carries out the reaction N(6)-carboxybiotinyl-L-lysyl-[protein] + propanoyl-CoA = methylmalonyl-CoA + N(6)-biotinyl-L-lysyl-[protein]. It functions in the pathway lipid metabolism; fatty acid biosynthesis. The protein operates within lipid metabolism; mycolic acid biosynthesis. Functionally, component of a biotin-dependent acyl-CoA carboxylase complex. This subunit transfers the CO2 from carboxybiotin to the CoA ester substrate. When associated with the alpha3 subunit AccA3, is involved in the carboxylation of acetyl-CoA and propionyl-CoA. The protein is Biotin-dependent acetyl-/propionyl-coenzyme A carboxylase beta6 subunit (accD6) of Mycobacterium bovis (strain ATCC BAA-935 / AF2122/97).